The following is a 141-amino-acid chain: Small ribosomal subunit protein uS12 (141 aa).

Belongs to the universal ribosomal protein uS12 family. Part of the 30S ribosomal subunit.

In terms of biological role, with S4 and S5 plays an important role in translational accuracy. Located at the interface of the 30S and 50S subunits. This Methanosphaera stadtmanae (strain ATCC 43021 / DSM 3091 / JCM 11832 / MCB-3) protein is Small ribosomal subunit protein uS12.